Consider the following 574-residue polypeptide: 5'-nucleotidase (574 aa).

Positions 1 to 26 are cleaved as a signal peptide; it reads MCPRAARAPATLLLALGAVLWPAAGA. Aspartate 36 and histidine 38 together coordinate Zn(2+). An intrachain disulfide couples cysteine 51 to cysteine 57. N-linked (GlcNAc...) asparagine glycosylation is present at asparagine 53. The Zn(2+) site is built by aspartate 85, asparagine 117, histidine 220, and histidine 243. Asparagine 311 and asparagine 333 each carry an N-linked (GlcNAc...) asparagine glycan. Disulfide bonds link cysteine 353-cysteine 358 and cysteine 365-cysteine 387. Arginine 354 serves as a coordination point for AMP. Arginine 354 lines the IMP pocket. Asparagine 390 and arginine 395 together coordinate AMP. IMP is bound by residues asparagine 390 and arginine 395. An N-linked (GlcNAc...) asparagine glycan is attached at asparagine 403. Phenylalanine 417 lines the AMP pocket. Phenylalanine 417 contributes to the IMP binding site. Cysteine 476 and cysteine 479 are disulfide-bonded. Residues phenylalanine 500 and aspartate 506 each contribute to the AMP site. Phenylalanine 500 and aspartate 506 together coordinate IMP. The GPI-anchor amidated serine moiety is linked to residue serine 549. Positions 550 to 574 are cleaved as a propeptide — removed in mature form; the sequence is TGSHCHGSFSLIFLSLWAVIFVLYQ.

This sequence belongs to the 5'-nucleotidase family. Homodimer. The cofactor is Zn(2+).

The protein localises to the cell membrane. It catalyses the reaction a ribonucleoside 5'-phosphate + H2O = a ribonucleoside + phosphate. It carries out the reaction a 2'-deoxyribonucleoside 5'-phosphate + H2O = a 2'-deoxyribonucleoside + phosphate. The catalysed reaction is dTMP + H2O = thymidine + phosphate. The enzyme catalyses CMP + H2O = cytidine + phosphate. It catalyses the reaction IMP + H2O = inosine + phosphate. It carries out the reaction AMP + H2O = adenosine + phosphate. The catalysed reaction is GMP + H2O = guanosine + phosphate. The enzyme catalyses UMP + H2O = uridine + phosphate. It catalyses the reaction dAMP + H2O = 2'-deoxyadenosine + phosphate. It carries out the reaction dCMP + H2O = 2'-deoxycytidine + phosphate. Inhibited by adenosine 5'-(alpha,beta-methylene)-diphosphate (AMPCP). In terms of biological role, catalyzes the hydrolysis of nucleotide monophosphates, releasing inorganic phosphate and the corresponding nucleoside, with AMP being the preferred substrate. Shows a preference for ribonucleotide monophosphates over their equivalent deoxyribose forms. Other substrates include IMP, UMP, GMP, CMP, dAMP, dCMP, dTMP, NAD and NMN. The sequence is that of 5'-nucleotidase (NT5E) from Homo sapiens (Human).